A 432-amino-acid polypeptide reads, in one-letter code: Adenylosuccinate synthetase (432 aa).

GTP is bound by residues 13–19 (GDEGKGK) and 41–43 (GHT). D14 acts as the Proton acceptor in catalysis. Positions 14 and 41 each coordinate Mg(2+). IMP is bound by residues 14–17 (DEGK), 39–42 (NAGH), T130, R144, Q225, T240, and R304. The Proton donor role is filled by H42. Substrate is bound at residue 300-306 (AVTGRPR). Residues R306, 332 to 334 (KLD), and 415 to 417 (STG) contribute to the GTP site.

The protein belongs to the adenylosuccinate synthetase family. As to quaternary structure, homodimer. It depends on Mg(2+) as a cofactor.

It is found in the cytoplasm. It carries out the reaction IMP + L-aspartate + GTP = N(6)-(1,2-dicarboxyethyl)-AMP + GDP + phosphate + 2 H(+). It participates in purine metabolism; AMP biosynthesis via de novo pathway; AMP from IMP: step 1/2. In terms of biological role, plays an important role in the de novo pathway of purine nucleotide biosynthesis. Catalyzes the first committed step in the biosynthesis of AMP from IMP. The chain is Adenylosuccinate synthetase from Glaesserella parasuis serovar 5 (strain SH0165) (Haemophilus parasuis).